The chain runs to 200 residues: Urease accessory protein UreG (200 aa).

A GTP-binding site is contributed by 11–18 (GPVGSGKT).

It belongs to the SIMIBI class G3E GTPase family. UreG subfamily. In terms of assembly, homodimer. UreD, UreF and UreG form a complex that acts as a GTP-hydrolysis-dependent molecular chaperone, activating the urease apoprotein by helping to assemble the nickel containing metallocenter of UreC. The UreE protein probably delivers the nickel.

It localises to the cytoplasm. Functionally, facilitates the functional incorporation of the urease nickel metallocenter. This process requires GTP hydrolysis, probably effectuated by UreG. This is Urease accessory protein UreG from Thermosynechococcus vestitus (strain NIES-2133 / IAM M-273 / BP-1).